The sequence spans 101 residues: Protein Tat (101 aa).

The segment at 1-24 (MEPVDPNLEPWKHPGSQPRTACTN) is interaction with human CREBBP. Positions 1–48 (MEPVDPNLEPWKHPGSQPRTACTNCYCKKCCFHCQVCFITKGLGISYG) are transactivation. Zn(2+)-binding residues include Cys-22, Cys-25, and Cys-27. The cysteine-rich stretch occupies residues 22–37 (CTNCYCKKCCFHCQVC). Lys-28 is subject to N6-acetyllysine; by host PCAF. Positions 30, 33, 34, and 37 each coordinate Zn(2+). The tract at residues 38 to 48 (FITKGLGISYG) is core. The interval 48-101 (GRKKRRQRQRAPDSSQNHQDSLSKQPSSQPRGDPTGPKESKKEVERETETDPLD) is disordered. Residues 49–57 (RKKRRQRQR) carry the Nuclear localization signal, RNA-binding (TAR), and protein transduction motif. The tract at residues 49 to 86 (RKKRRQRQRAPDSSQNHQDSLSKQPSSQPRGDPTGPKE) is interaction with the host capping enzyme RNGTT. N6-acetyllysine; by host EP300 and GCN5L2 occurs at positions 50 and 51. An asymmetric dimethylarginine; by host PRMT6 mark is found at Arg-52 and Arg-53. Over residues 59-77 (PDSSQNHQDSLSKQPSSQP) the composition is skewed to polar residues. A Glycyl lysine isopeptide (Lys-Gly) (interchain with G-Cter in ubiquitin) cross-link involves residue Lys-71. A Cell attachment site motif is present at residues 78 to 80 (RGD). Basic and acidic residues predominate over residues 83 to 101 (GPKESKKEVERETETDPLD).

The protein belongs to the lentiviruses Tat family. In terms of assembly, interacts with host CCNT1. Associates with the P-TEFb complex composed at least of Tat, P-TEFb (CDK9 and CCNT1), TAR RNA, RNA Pol II. Recruits the HATs CREBBP, TAF1/TFIID, EP300, PCAF and GCN5L2. Interacts with host KAT5/Tip60; this interaction targets the latter to degradation. Interacts with the host deacetylase SIRT1. Interacts with host capping enzyme RNGTT; this interaction stimulates RNGTT. Binds to host KDR, and to the host integrins ITGAV/ITGB3 and ITGA5/ITGB1. Interacts with host KPNB1/importin beta-1 without previous binding to KPNA1/importin alpha-1. Interacts with EIF2AK2. Interacts with host nucleosome assembly protein NAP1L1; this interaction may be required for the transport of Tat within the nucleus, since the two proteins interact at the nuclear rim. Interacts with host C1QBP/SF2P32; this interaction involves lysine-acetylated Tat. Interacts with the host chemokine receptors CCR2, CCR3 and CXCR4. Interacts with host DPP4/CD26; this interaction may trigger an anti-proliferative effect. Interacts with host LDLR. Interacts with the host extracellular matrix metalloproteinase MMP1. Interacts with host PRMT6; this interaction mediates Tat's methylation. Interacts with, and is ubiquitinated by MDM2/Hdm2. Interacts with host PSMC3 and HTATIP2. Interacts with STAB1; this interaction may overcome SATB1-mediated repression of IL2 and IL2RA (interleukin) in T cells by binding to the same domain than HDAC1. Interacts (when acetylated) with human CDK13, thereby increasing HIV-1 mRNA splicing and promoting the production of the doubly spliced HIV-1 protein Nef. Interacts with host TBP; this interaction modulates the activity of transcriptional pre-initiation complex. Interacts with host RELA. Interacts with host PLSCR1; this interaction negatively regulates Tat transactivation activity by altering its subcellular distribution. In terms of processing, asymmetrical arginine methylation by host PRMT6 seems to diminish the transactivation capacity of Tat and affects the interaction with host CCNT1. Post-translationally, acetylation by EP300, CREBBP, GCN5L2/GCN5 and PCAF regulates the transactivation activity of Tat. EP300-mediated acetylation of Lys-50 promotes dissociation of Tat from the TAR RNA through the competitive binding to PCAF's bromodomain. In addition, the non-acetylated Tat's N-terminus can also interact with PCAF. PCAF-mediated acetylation of Lys-28 enhances Tat's binding to CCNT1. Lys-50 is deacetylated by SIRT1. Polyubiquitination by host MDM2 does not target Tat to degradation, but activates its transactivation function and fosters interaction with CCNT1 and TAR RNA. In terms of processing, phosphorylated by EIF2AK2 on serine and threonine residues adjacent to the basic region important for TAR RNA binding and function. Phosphorylation of Tat by EIF2AK2 is dependent on the prior activation of EIF2AK2 by dsRNA.

Its subcellular location is the host nucleus. The protein localises to the host nucleolus. It is found in the host cytoplasm. It localises to the secreted. Transcriptional activator that increases RNA Pol II processivity, thereby increasing the level of full-length viral transcripts. Recognizes a hairpin structure at the 5'-LTR of the nascent viral mRNAs referred to as the transactivation responsive RNA element (TAR) and recruits the cyclin T1-CDK9 complex (P-TEFb complex) that will in turn hyperphosphorylate the RNA polymerase II to allow efficient elongation. The CDK9 component of P-TEFb and other Tat-activated kinases hyperphosphorylate the C-terminus of RNA Pol II that becomes stabilized and much more processive. Other factors such as HTATSF1/Tat-SF1, SUPT5H/SPT5, and HTATIP2 are also important for Tat's function. Besides its effect on RNA Pol II processivity, Tat induces chromatin remodeling of proviral genes by recruiting the histone acetyltransferases (HATs) CREBBP, EP300 and PCAF to the chromatin. This also contributes to the increase in proviral transcription rate, especially when the provirus integrates in transcriptionally silent region of the host genome. To ensure maximal activation of the LTR, Tat mediates nuclear translocation of NF-kappa-B by interacting with host RELA. Through its interaction with host TBP, Tat may also modulate transcription initiation. Tat can reactivate a latently infected cell by penetrating in it and transactivating its LTR promoter. In the cytoplasm, Tat is thought to act as a translational activator of HIV-1 mRNAs. In terms of biological role, extracellular circulating Tat can be endocytosed by surrounding uninfected cells via the binding to several surface receptors such as CD26, CXCR4, heparan sulfate proteoglycans (HSPG) or LDLR. Neurons are rarely infected, but they internalize Tat via their LDLR. Through its interaction with nuclear HATs, Tat is potentially able to control the acetylation-dependent cellular gene expression. Modulates the expression of many cellular genes involved in cell survival, proliferation or in coding for cytokines or cytokine receptors. Tat plays a role in T-cell and neurons apoptosis. Tat induced neurotoxicity and apoptosis probably contribute to neuroAIDS. Circulating Tat also acts as a chemokine-like and/or growth factor-like molecule that binds to specific receptors on the surface of the cells, affecting many cellular pathways. In the vascular system, Tat binds to ITGAV/ITGB3 and ITGA5/ITGB1 integrins dimers at the surface of endothelial cells and competes with bFGF for heparin-binding sites, leading to an excess of soluble bFGF. This is Protein Tat from Human immunodeficiency virus type 1 group M subtype B (isolate SF33) (HIV-1).